Reading from the N-terminus, the 128-residue chain is Sulfurtransferase TusD (128 aa).

The active-site Cysteine persulfide intermediate is Cys78.

It belongs to the DsrE/TusD family. As to quaternary structure, heterohexamer, formed by a dimer of trimers. The hexameric TusBCD complex contains 2 copies each of TusB, TusC and TusD. The TusBCD complex interacts with TusE.

The protein localises to the cytoplasm. Functionally, part of a sulfur-relay system required for 2-thiolation of 5-methylaminomethyl-2-thiouridine (mnm(5)s(2)U) at tRNA wobble positions. Accepts sulfur from TusA and transfers it in turn to TusE. This is Sulfurtransferase TusD from Klebsiella pneumoniae (strain 342).